The following is a 61-amino-acid chain: Photosystem II assembly protein Psb34 (61 aa).

A helical membrane pass occupies residues 36-56 (LIMAAITVVLVAGLIAVAVVA).

Belongs to the Psb34 family. In terms of assembly, part of the photosystem II (PSII) assembly intermediate RC47 complex (with D1, D2, CP47, PsbE, PsbF, PsbH, Psb27 and Psb28); minor amounts are found in other PSII complexes, including mature, dimeric PSII with PsbO and PsbV. No HliA or HliB are detected in any of these complexes. Its interaction with PSII requires both CP47 (psbB) and PsbH. HliA/HliB and Psb34 probably bind to a similar site on CP47; their binding seems to be mutually exclusive.

The protein localises to the cellular thylakoid membrane. Involved in photosystem II (PSII) assembly and/or repair. Probably involved in conversion of late PSII assembly intermediates into mature dimeric PSII, it may mediate the optimal equlibrium of HliA/HliB among the intermediates containing CP47 (psbB) to facilitate photoprotection during assembly. This Synechocystis sp. (strain ATCC 27184 / PCC 6803 / Kazusa) protein is Photosystem II assembly protein Psb34.